Reading from the N-terminus, the 152-residue chain is Lipoprotein signal peptidase (152 aa).

Helical transmembrane passes span asparagine 55–methionine 75 and leucine 85–phenylalanine 105. Residues aspartate 111 and aspartate 129 contribute to the active site. The helical transmembrane segment at valine 124 to leucine 144 threads the bilayer.

Belongs to the peptidase A8 family.

The protein resides in the cell membrane. It catalyses the reaction Release of signal peptides from bacterial membrane prolipoproteins. Hydrolyzes -Xaa-Yaa-Zaa-|-(S,diacylglyceryl)Cys-, in which Xaa is hydrophobic (preferably Leu), and Yaa (Ala or Ser) and Zaa (Gly or Ala) have small, neutral side chains.. It functions in the pathway protein modification; lipoprotein biosynthesis (signal peptide cleavage). Functionally, this protein specifically catalyzes the removal of signal peptides from prolipoproteins. The protein is Lipoprotein signal peptidase of Bacillus cereus (strain B4264).